We begin with the raw amino-acid sequence, 367 residues long: Ferrochelatase (367 aa).

Fe cation-binding residues include histidine 213 and glutamate 294.

Belongs to the ferrochelatase family.

The protein localises to the cytoplasm. It carries out the reaction heme b + 2 H(+) = protoporphyrin IX + Fe(2+). It functions in the pathway porphyrin-containing compound metabolism; protoheme biosynthesis; protoheme from protoporphyrin-IX: step 1/1. Functionally, catalyzes the ferrous insertion into protoporphyrin IX. The sequence is that of Ferrochelatase from Polaromonas sp. (strain JS666 / ATCC BAA-500).